The following is a 91-amino-acid chain: N.vectensis toxin 8 (91 aa).

An N-terminal signal peptide occupies residues 1–26 (MNSLLKVAVVCLVMLVACFVPRVILT). 3 cysteine pairs are disulfide-bonded: C45–C76, C47–C67, and C60–C77.

As to expression, expressed in ectodermal gland cells.

Functionally, has toxic effects on zebrafish larvae. It causes contractile paralysis and twitching of the tail within 20 minutes, followed by death within 30 minutes. Does not show any toxicity when injected into arthropods (cherry shrimps or grass shrimps). The sequence is that of N.vectensis toxin 8 from Nematostella vectensis (Starlet sea anemone).